Reading from the N-terminus, the 566-residue chain is Proline--tRNA ligase (566 aa).

It belongs to the class-II aminoacyl-tRNA synthetase family. ProS type 1 subfamily. Homodimer.

The protein resides in the cytoplasm. The catalysed reaction is tRNA(Pro) + L-proline + ATP = L-prolyl-tRNA(Pro) + AMP + diphosphate. Functionally, catalyzes the attachment of proline to tRNA(Pro) in a two-step reaction: proline is first activated by ATP to form Pro-AMP and then transferred to the acceptor end of tRNA(Pro). As ProRS can inadvertently accommodate and process non-cognate amino acids such as alanine and cysteine, to avoid such errors it has two additional distinct editing activities against alanine. One activity is designated as 'pretransfer' editing and involves the tRNA(Pro)-independent hydrolysis of activated Ala-AMP. The other activity is designated 'posttransfer' editing and involves deacylation of mischarged Ala-tRNA(Pro). The misacylated Cys-tRNA(Pro) is not edited by ProRS. This Bacillus cytotoxicus (strain DSM 22905 / CIP 110041 / 391-98 / NVH 391-98) protein is Proline--tRNA ligase.